The primary structure comprises 142 residues: Required for drug-induced death protein 1 (142 aa).

Disordered regions lie at residues 1 to 32 (MTVG…DEEA) and 46 to 66 (EAAA…TRGA). Residues 116–138 (VVIGLQGFAAAYSAPFAVATSVV) form a helical membrane-spanning segment.

It is found in the membrane. Its function is as follows. Regulates drug efflux through modulation of ABCB1 localization and activity. This chain is Required for drug-induced death protein 1, found in Homo sapiens (Human).